We begin with the raw amino-acid sequence, 388 residues long: Putative membrane protein MJ1562 (388 aa).

The next 6 helical transmembrane spans lie at phenylalanine 22–valine 42, serine 219–phenylalanine 239, isoleucine 246–leucine 266, alanine 273–methionine 293, alanine 320–leucine 340, and alanine 351–isoleucine 371.

It belongs to the resistance-nodulation-cell division (RND) (TC 2.A.6) family. MmpL subfamily.

It localises to the cell membrane. In Methanocaldococcus jannaschii (strain ATCC 43067 / DSM 2661 / JAL-1 / JCM 10045 / NBRC 100440) (Methanococcus jannaschii), this protein is Putative membrane protein MJ1562.